Reading from the N-terminus, the 856-residue chain is DNA gyrase subunit A (856 aa).

Residues 45-517 (LPDARDGLKP…DDGTVTHEDL (473 aa)) enclose the Topo IIA-type catalytic domain. The active-site O-(5'-phospho-DNA)-tyrosine intermediate is the Y133. The short motif at 544–550 (QHRGGKG) is the GyrA-box element. The interval 822–856 (TVASVDTHPRTDDSSEADSGDGESESENATATTPS) is disordered. The segment covering 835–847 (SSEADSGDGESES) has biased composition (acidic residues).

This sequence belongs to the type II topoisomerase GyrA/ParC subunit family. In terms of assembly, heterotetramer, composed of two GyrA and two GyrB chains. In the heterotetramer, GyrA contains the active site tyrosine that forms a transient covalent intermediate with DNA, while GyrB binds cofactors and catalyzes ATP hydrolysis.

The protein resides in the cytoplasm. The enzyme catalyses ATP-dependent breakage, passage and rejoining of double-stranded DNA.. A type II topoisomerase that negatively supercoils closed circular double-stranded (ds) DNA in an ATP-dependent manner to modulate DNA topology and maintain chromosomes in an underwound state. Negative supercoiling favors strand separation, and DNA replication, transcription, recombination and repair, all of which involve strand separation. Also able to catalyze the interconversion of other topological isomers of dsDNA rings, including catenanes and knotted rings. Type II topoisomerases break and join 2 DNA strands simultaneously in an ATP-dependent manner. This chain is DNA gyrase subunit A, found in Haloquadratum walsbyi (strain DSM 16790 / HBSQ001).